The chain runs to 510 residues: MTSTVTQQASGPSPDRSARTFEVRTYGCQMNVHDSERLAGLLEGAGYRRAGEGADADIVVFNTCAVRENADNKLYGNLSHLAPRKQSDPDMQIAVGGCLAQKDRDSVLRKAPWVDVVFGTHNIGSLPALLDRARHNRVAQVEIAEALQEFPSALPASRESSYAAWVSISVGCNNTCTFCIVPALRGREVDRRPGDVLAEVQSLVDQGVLEITLLGQNVNAYGVSFADPTEPRDRGAFAKLLRACGRIDGLERVRFTSPHPAEFTDDVIEAMAETPNVCPTLHMPLQSGSDRILRAMRRSYRAERYLGIIDRVRAAIPHAAITTDLIVGFPGETEEDFQATLDVVAASRFSSAFTFQYSKRPGTPAAELADQVPKAVVSERYQRLIELQERISLEENTAQIGRRVELLVATGEGRKDAATARMSGRARDGRLVHFAPGAVGSEVRPGDVVVTTVTGAAPHHLIADAGLIEHRRTRAGDAHAAGQKPRTGVGLGMPAVGAPDPLPATTGCAR.

In terms of domain architecture, MTTase N-terminal spans Arg19–His135. Cys28, Cys64, Cys98, Cys172, Cys176, and Cys179 together coordinate [4Fe-4S] cluster. The region spanning Arg158–Glu394 is the Radical SAM core domain. The 71-residue stretch at Thr397–Leu467 folds into the TRAM domain. Residues Asp477 to Arg510 are disordered.

It belongs to the methylthiotransferase family. MiaB subfamily. As to quaternary structure, monomer. [4Fe-4S] cluster serves as cofactor.

It is found in the cytoplasm. The catalysed reaction is N(6)-dimethylallyladenosine(37) in tRNA + (sulfur carrier)-SH + AH2 + 2 S-adenosyl-L-methionine = 2-methylsulfanyl-N(6)-dimethylallyladenosine(37) in tRNA + (sulfur carrier)-H + 5'-deoxyadenosine + L-methionine + A + S-adenosyl-L-homocysteine + 2 H(+). Catalyzes the methylthiolation of N6-(dimethylallyl)adenosine (i(6)A), leading to the formation of 2-methylthio-N6-(dimethylallyl)adenosine (ms(2)i(6)A) at position 37 in tRNAs that read codons beginning with uridine. The chain is tRNA-2-methylthio-N(6)-dimethylallyladenosine synthase from Mycolicibacterium vanbaalenii (strain DSM 7251 / JCM 13017 / BCRC 16820 / KCTC 9966 / NRRL B-24157 / PYR-1) (Mycobacterium vanbaalenii).